The sequence spans 515 residues: Lysine--tRNA ligase (515 aa).

Residues E425 and E432 each coordinate Mg(2+).

The protein belongs to the class-II aminoacyl-tRNA synthetase family. In terms of assembly, homodimer. The cofactor is Mg(2+).

It is found in the cytoplasm. It carries out the reaction tRNA(Lys) + L-lysine + ATP = L-lysyl-tRNA(Lys) + AMP + diphosphate. The protein is Lysine--tRNA ligase of Cupriavidus metallidurans (strain ATCC 43123 / DSM 2839 / NBRC 102507 / CH34) (Ralstonia metallidurans).